Reading from the N-terminus, the 350-residue chain is Cytosolic Fe-S cluster assembly factor NBP35 (350 aa).

The segment at 1-30 is disordered; that stretch reads MENGDIPEDANEHCPGPQSESAGKSDSCAG. The [4Fe-4S] cluster site is built by C14, C28, C31, and C37. ATP is bound at residue 67 to 74; the sequence is GKGGVGKS.

The protein belongs to the Mrp/NBP35 ATP-binding proteins family. NUBP1/NBP35 subfamily. As to quaternary structure, homodimer and homotetramer. Predominantly homodimeric. Requires [4Fe-4S] cluster as cofactor.

Its subcellular location is the cytoplasm. In terms of biological role, component of the cytosolic iron-sulfur (Fe-S) protein assembly (CIA) machinery. Required for maturation of extramitochondrial Fe-S proteins. Functions as a Fe-S scaffold, mediating the de novo assembly of an Fe-S cluster and its transfer to target apoproteins. Essential for embryo development. The protein is Cytosolic Fe-S cluster assembly factor NBP35 of Arabidopsis thaliana (Mouse-ear cress).